Consider the following 437-residue polypeptide: Ribosomal protein uS12 methylthiotransferase RimO (437 aa).

One can recognise an MTTase N-terminal domain in the interval 5 to 116; the sequence is PTISVSHLGC…IAEVIQRVET (112 aa). The [4Fe-4S] cluster site is built by Cys14, Cys50, Cys79, Cys154, Cys158, and Cys161. The region spanning 140–369 is the Radical SAM core domain; sequence TTNEAVAYLR…MEIQQPIAAK (230 aa). The 66-residue stretch at 372 to 437 folds into the TRAM domain; that stretch reads QKCVGQTVEV…DVYDLYGKVI (66 aa).

This sequence belongs to the methylthiotransferase family. RimO subfamily. The cofactor is [4Fe-4S] cluster.

Its subcellular location is the cytoplasm. It carries out the reaction L-aspartate(89)-[ribosomal protein uS12]-hydrogen + (sulfur carrier)-SH + AH2 + 2 S-adenosyl-L-methionine = 3-methylsulfanyl-L-aspartate(89)-[ribosomal protein uS12]-hydrogen + (sulfur carrier)-H + 5'-deoxyadenosine + L-methionine + A + S-adenosyl-L-homocysteine + 2 H(+). Catalyzes the methylthiolation of an aspartic acid residue of ribosomal protein uS12. The polypeptide is Ribosomal protein uS12 methylthiotransferase RimO (Crocosphaera subtropica (strain ATCC 51142 / BH68) (Cyanothece sp. (strain ATCC 51142))).